We begin with the raw amino-acid sequence, 902 residues long: Protein translocase subunit SecA (902 aa).

ATP-binding positions include Gln-87, 105–109 (GEGKT), and Asp-512. Disordered regions lie at residues 565–584 (RRID…PGSS) and 840–902 (VEEQ…GKLK). Basic and acidic residues-rich tracts occupy residues 840–859 (VEEQ…HEDA) and 873–882 (QVREGAKVGR). 4 residues coordinate Zn(2+): Cys-886, Cys-888, Cys-897, and His-898. A compositionally biased stretch (basic residues) spans 892-902 (KKYKQCHGKLK).

This sequence belongs to the SecA family. In terms of assembly, monomer and homodimer. Part of the essential Sec protein translocation apparatus which comprises SecA, SecYEG and auxiliary proteins SecDF-YajC and YidC. It depends on Zn(2+) as a cofactor.

It is found in the cell inner membrane. It localises to the cytoplasm. The enzyme catalyses ATP + H2O + cellular proteinSide 1 = ADP + phosphate + cellular proteinSide 2.. In terms of biological role, part of the Sec protein translocase complex. Interacts with the SecYEG preprotein conducting channel. Has a central role in coupling the hydrolysis of ATP to the transfer of proteins into and across the cell membrane, serving both as a receptor for the preprotein-SecB complex and as an ATP-driven molecular motor driving the stepwise translocation of polypeptide chains across the membrane. In Alteromonas mediterranea (strain DSM 17117 / CIP 110805 / LMG 28347 / Deep ecotype), this protein is Protein translocase subunit SecA.